Consider the following 352-residue polypeptide: UDP-N-acetylglucosamine--N-acetylmuramyl-(pentapeptide) pyrophosphoryl-undecaprenol N-acetylglucosamine transferase 3 (352 aa).

UDP-N-acetyl-alpha-D-glucosamine-binding positions include 11–13 (SAG), arginine 164, serine 194, and glutamine 289.

The protein belongs to the glycosyltransferase 28 family. MurG subfamily.

The protein resides in the cell membrane. It carries out the reaction di-trans,octa-cis-undecaprenyl diphospho-N-acetyl-alpha-D-muramoyl-L-alanyl-D-glutamyl-meso-2,6-diaminopimeloyl-D-alanyl-D-alanine + UDP-N-acetyl-alpha-D-glucosamine = di-trans,octa-cis-undecaprenyl diphospho-[N-acetyl-alpha-D-glucosaminyl-(1-&gt;4)]-N-acetyl-alpha-D-muramoyl-L-alanyl-D-glutamyl-meso-2,6-diaminopimeloyl-D-alanyl-D-alanine + UDP + H(+). It participates in cell wall biogenesis; peptidoglycan biosynthesis. Its function is as follows. Cell wall formation. Catalyzes the transfer of a GlcNAc subunit on undecaprenyl-pyrophosphoryl-MurNAc-pentapeptide (lipid intermediate I) to form undecaprenyl-pyrophosphoryl-MurNAc-(pentapeptide)GlcNAc (lipid intermediate II). In Bacillus thuringiensis (strain Al Hakam), this protein is UDP-N-acetylglucosamine--N-acetylmuramyl-(pentapeptide) pyrophosphoryl-undecaprenol N-acetylglucosamine transferase 3.